Here is a 756-residue protein sequence, read N- to C-terminus: Protein psiP (756 aa).

The first 23 residues, 1–23 (MFIQRTFLKVLTLLSIVTVLVHG), serve as a signal peptide directing secretion. The Extracellular portion of the chain corresponds to 24–692 (QTQPKDKITL…NCNTGAVVST (669 aa)). Asparagine 82 carries an N-linked (GlcNAc...) asparagine glycan. Positions 126–281 (LNWNGEAYEY…VDYCGVCEGD (156 aa)) constitute a PA14 domain. N-linked (GlcNAc...) asparagine glycans are attached at residues asparagine 359, asparagine 483, asparagine 564, and asparagine 663. The helical transmembrane segment at 693-713 (AVIAGSTVAGAVALGIFLYGG) threads the bilayer. The Cytoplasmic segment spans residues 714 to 756 (KKGYDYWKDSRNISMGSSNSNPLYEEQQTGRGVNPMYDDPAAN). The segment covering 730-744 (SSNSNPLYEEQQTGR) has biased composition (polar residues). Residues 730–756 (SSNSNPLYEEQQTGRGVNPMYDDPAAN) form a disordered region.

This sequence belongs to the prespore-cell-inducing factor family.

Its subcellular location is the membrane. In Dictyostelium discoideum (Social amoeba), this protein is Protein psiP (psiP).